Reading from the N-terminus, the 171-residue chain is Co-chaperone protein HscB homolog (171 aa).

In terms of domain architecture, J spans N2–E74.

It belongs to the HscB family. Interacts with HscA and stimulates its ATPase activity.

Functionally, co-chaperone involved in the maturation of iron-sulfur cluster-containing proteins. Seems to help targeting proteins to be folded toward HscA. The chain is Co-chaperone protein HscB homolog from Aliivibrio fischeri (strain ATCC 700601 / ES114) (Vibrio fischeri).